Here is a 386-residue protein sequence, read N- to C-terminus: Succinate--CoA ligase [ADP-forming] subunit beta (386 aa).

The ATP-grasp domain occupies 9–244 (KELLKQFGVT…LDEEDPAEIE (236 aa)). ATP contacts are provided by residues K46, 53–55 (GRG), E99, A102, and E107. The Mg(2+) site is built by N199 and D213. Residues N264 and 321-323 (GIM) each bind substrate.

This sequence belongs to the succinate/malate CoA ligase beta subunit family. In terms of assembly, heterotetramer of two alpha and two beta subunits. Requires Mg(2+) as cofactor.

The catalysed reaction is succinate + ATP + CoA = succinyl-CoA + ADP + phosphate. It carries out the reaction GTP + succinate + CoA = succinyl-CoA + GDP + phosphate. It functions in the pathway carbohydrate metabolism; tricarboxylic acid cycle; succinate from succinyl-CoA (ligase route): step 1/1. Functionally, succinyl-CoA synthetase functions in the citric acid cycle (TCA), coupling the hydrolysis of succinyl-CoA to the synthesis of either ATP or GTP and thus represents the only step of substrate-level phosphorylation in the TCA. The beta subunit provides nucleotide specificity of the enzyme and binds the substrate succinate, while the binding sites for coenzyme A and phosphate are found in the alpha subunit. The protein is Succinate--CoA ligase [ADP-forming] subunit beta of Bordetella pertussis (strain Tohama I / ATCC BAA-589 / NCTC 13251).